The sequence spans 329 residues: Mitochondrial substrate carrier family protein Q (329 aa).

Solcar repeat units lie at residues 18-115 (VEAL…LKSI), 125-206 (LGTI…LRAL), and 216-310 (LGGL…VVIH). 6 consecutive transmembrane segments (helical) span residues 21 to 41 (LGHAISGGVAGMAAIALTYPF), 95 to 115 (LIGIGASSFVYYYWYTLLKSI), 131 to 151 (LAIAALAGCANVLTTLPIWVV), 175 to 195 (GFGGLYKGLIPALILVSNPSV), 221 to 241 (VFILGAIAKLIAGIVTYPYLL), and 298 to 318 (AFMFLVKDKVVIHAVAILFYL).

The protein belongs to the mitochondrial carrier (TC 2.A.29) family.

It is found in the peroxisome membrane. In terms of biological role, may have transport activity. The chain is Mitochondrial substrate carrier family protein Q (mcfQ) from Dictyostelium discoideum (Social amoeba).